A 377-amino-acid polypeptide reads, in one-letter code: Succinyl-diaminopimelate desuccinylase (377 aa).

His66 is a binding site for Zn(2+). Residue Asp68 is part of the active site. Asp99 lines the Zn(2+) pocket. Glu133 serves as the catalytic Proton acceptor. The Zn(2+) site is built by Glu134, Glu163, and His349.

It belongs to the peptidase M20A family. DapE subfamily. In terms of assembly, homodimer. It depends on Zn(2+) as a cofactor. Co(2+) serves as cofactor.

It catalyses the reaction N-succinyl-(2S,6S)-2,6-diaminopimelate + H2O = (2S,6S)-2,6-diaminopimelate + succinate. It functions in the pathway amino-acid biosynthesis; L-lysine biosynthesis via DAP pathway; LL-2,6-diaminopimelate from (S)-tetrahydrodipicolinate (succinylase route): step 3/3. In terms of biological role, catalyzes the hydrolysis of N-succinyl-L,L-diaminopimelic acid (SDAP), forming succinate and LL-2,6-diaminopimelate (DAP), an intermediate involved in the bacterial biosynthesis of lysine and meso-diaminopimelic acid, an essential component of bacterial cell walls. The protein is Succinyl-diaminopimelate desuccinylase of Legionella pneumophila (strain Paris).